The sequence spans 378 residues: Apoptosis-inducing factor 1 (378 aa).

Residues asparagine 7–tyrosine 25 traverse the membrane as a helical segment. Residues glycine 12–phenylalanine 16, arginine 51, lysine 56, and aspartate 283 contribute to the FAD site.

This sequence belongs to the FAD-dependent oxidoreductase family. Requires FAD as cofactor.

It is found in the mitochondrion outer membrane. It localises to the nucleus. Functionally, putative FAD-dependent oxidoreductase involved in the resistance to cercosporin and other singlet oxygen-generating photosensitizers. Translocates from mitochondria to the nucleus under apoptotic conditions, where it degrades DNA and induces apoptosis. The sequence is that of Apoptosis-inducing factor 1 (AIF1) from Saccharomyces cerevisiae (strain ATCC 204508 / S288c) (Baker's yeast).